A 164-amino-acid chain; its full sequence is NADH-quinone oxidoreductase subunit I (164 aa).

2 4Fe-4S ferredoxin-type domains span residues Leu55 to Glu85 and Thr95 to Asn124. 8 residues coordinate [4Fe-4S] cluster: Cys65, Cys68, Cys71, Cys75, Cys104, Cys107, Cys110, and Cys114.

This sequence belongs to the complex I 23 kDa subunit family. NDH-1 is composed of 14 different subunits. Subunits NuoA, H, J, K, L, M, N constitute the membrane sector of the complex. Requires [4Fe-4S] cluster as cofactor.

The protein localises to the cell inner membrane. The enzyme catalyses a quinone + NADH + 5 H(+)(in) = a quinol + NAD(+) + 4 H(+)(out). In terms of biological role, NDH-1 shuttles electrons from NADH, via FMN and iron-sulfur (Fe-S) centers, to quinones in the respiratory chain. The immediate electron acceptor for the enzyme in this species is believed to be ubiquinone. Couples the redox reaction to proton translocation (for every two electrons transferred, four hydrogen ions are translocated across the cytoplasmic membrane), and thus conserves the redox energy in a proton gradient. The chain is NADH-quinone oxidoreductase subunit I from Ruegeria pomeroyi (strain ATCC 700808 / DSM 15171 / DSS-3) (Silicibacter pomeroyi).